A 191-amino-acid polypeptide reads, in one-letter code: Signal peptidase IB (191 aa).

Residues 1 to 7 are Cytoplasmic-facing; sequence MKKEILE. A helical membrane pass occupies residues 8–28; it reads WIISIAVAFVILFIVGKFIVT. Topologically, residues 29 to 191 are extracellular; sequence PYTIKGESMD…HNFNPENTKN (163 aa). Active-site residues include serine 36 and lysine 77.

This sequence belongs to the peptidase S26 family.

The protein localises to the cell membrane. The enzyme catalyses Cleavage of hydrophobic, N-terminal signal or leader sequences from secreted and periplasmic proteins.. Functionally, essential for cell viability. The chain is Signal peptidase IB (spsB) from Staphylococcus aureus (strain COL).